The chain runs to 403 residues: MTPLLRFLNRTSLVTQIVIGLLAGIALALLAPAIARDLAFLGKVFVSALKAVAPVLVFILVMASVANHRHGQETHIRPILWLYLLGTFAAAVVAVVASMLFPSHLALSTSEASLSAPGGITEVLQNLLLSAVDNPVNALLNANFIGVLTWAIGLGVALRHAGETTRTVVEDLSTGVTLIVRVVIRFAPLGIFGLVSSTLAQSGLDALLGYLHLLAVLIGCMLFVALVMNPLIVFWKIRRNPYPLTLLCLRESGITAFFTRSSAANIPVNLALSERLGLHEDTYSVSIPLGATINMAGAAITITVLTLAAVHTLGIQVDLPTAVLLSVVAAVCACGASGVAGGSLLLIPLACSLFGIPSEIAMQVVAVGFIIGVLQDSAETALNSSTDVLFTAAACQAKEQRNG.

A run of 9 helical transmembrane segments spans residues 14–34 (VTQIVIGLLAGIALALLAPAI), 44–64 (VFVSALKAVAPVLVFILVMAS), 79–99 (ILWLYLLGTFAAAVVAVVASM), 138–158 (ALLNANFIGVLTWAIGLGVAL), 175–195 (GVTLIVRVVIRFAPLGIFGLV), 214–234 (LAVLIGCMLFVALVMNPLIVF), 295–315 (MAGAAITITVLTLAAVHTLGI), 327–347 (VVAAVCACGASGVAGGSLLLI), and 353–373 (LFGIPSEIAMQVVAVGFIIGV).

Belongs to the dicarboxylate/amino acid:cation symporter (DAACS) (TC 2.A.23) family.

It localises to the cell inner membrane. The enzyme catalyses L-serine(in) + Na(+)(in) = L-serine(out) + Na(+)(out). It catalyses the reaction L-threonine(in) + Na(+)(in) = L-threonine(out) + Na(+)(out). Involved in the import of serine and threonine into the cell, with the concomitant import of sodium (symport system). This Pseudomonas putida (strain ATCC 700007 / DSM 6899 / JCM 31910 / BCRC 17059 / LMG 24140 / F1) protein is Serine/threonine transporter SstT.